The primary structure comprises 122 residues: Large ribosomal subunit protein bL12 (122 aa).

It belongs to the bacterial ribosomal protein bL12 family. As to quaternary structure, homodimer. Part of the ribosomal stalk of the 50S ribosomal subunit. Forms a multimeric L10(L12)X complex, where L10 forms an elongated spine to which 2 to 4 L12 dimers bind in a sequential fashion. Binds GTP-bound translation factors.

Forms part of the ribosomal stalk which helps the ribosome interact with GTP-bound translation factors. Is thus essential for accurate translation. The chain is Large ribosomal subunit protein bL12 from Bdellovibrio bacteriovorus (strain ATCC 15356 / DSM 50701 / NCIMB 9529 / HD100).